A 470-amino-acid chain; its full sequence is tRNA modification GTPase MnmE (470 aa).

Lysine 27, glutamate 90, and arginine 129 together coordinate (6S)-5-formyl-5,6,7,8-tetrahydrofolate. In terms of domain architecture, TrmE-type G spans 231–391 (GVSLVLAGKP…LRDFLNQRFL (161 aa)). GTP-binding positions include 241–246 (NVGKSS), 260–266 (TPFPGTT), and 285–288 (DTAG). Mg(2+)-binding residues include serine 245 and threonine 266. Lysine 470 provides a ligand contact to (6S)-5-formyl-5,6,7,8-tetrahydrofolate.

This sequence belongs to the TRAFAC class TrmE-Era-EngA-EngB-Septin-like GTPase superfamily. TrmE GTPase family. In terms of assembly, homodimer. Heterotetramer of two MnmE and two MnmG subunits. K(+) is required as a cofactor.

It is found in the cytoplasm. Functionally, exhibits a very high intrinsic GTPase hydrolysis rate. Involved in the addition of a carboxymethylaminomethyl (cmnm) group at the wobble position (U34) of certain tRNAs, forming tRNA-cmnm(5)s(2)U34. The protein is tRNA modification GTPase MnmE of Syntrophobacter fumaroxidans (strain DSM 10017 / MPOB).